An 82-amino-acid chain; its full sequence is Small ribosomal subunit protein uS17c (82 aa).

This sequence belongs to the universal ribosomal protein uS17 family. Part of the 30S ribosomal subunit.

It localises to the plastid. The protein resides in the chloroplast. Its function is as follows. One of the primary rRNA binding proteins, it binds specifically to the 5'-end of 16S ribosomal RNA. This chain is Small ribosomal subunit protein uS17c (rps17), found in Emiliania huxleyi (Coccolithophore).